A 356-amino-acid chain; its full sequence is Inactive ubiquitin thioesterase OTULINL (356 aa).

Residues 1–22 are disordered; that stretch reads MAATRSPTRARERERSGAPAAG. Residues 1-83 form a required for membrane binding region; it reads MAATRSPTRA…KWWIGYLQRK (83 aa). Positions 128–356 constitute an OTU domain; the sequence is KCVRQVRRDN…NDRHYHIPVF (229 aa).

Belongs to the peptidase C65 family. Otulin subfamily. In terms of assembly, does not bind ubiquitin or ubiquitin-like proteins.

The protein resides in the cytoplasm. It localises to the endoplasmic reticulum membrane. The protein localises to the nucleus envelope. Functionally, lacks deubiquitinase activity. The protein is Inactive ubiquitin thioesterase OTULINL of Homo sapiens (Human).